We begin with the raw amino-acid sequence, 360 residues long: Josephin-like protein (360 aa).

The region spanning 5–192 (ESKIYHERQR…NQLPLASNYR (188 aa)) is the Josephin domain. C18 serves as the catalytic Nucleophile. H129 serves as the catalytic Proton acceptor.

The catalysed reaction is Thiol-dependent hydrolysis of ester, thioester, amide, peptide and isopeptide bonds formed by the C-terminal Gly of ubiquitin (a 76-residue protein attached to proteins as an intracellular targeting signal).. Its function is as follows. May act as a deubiquitinating enzyme. The chain is Josephin-like protein from Arabidopsis thaliana (Mouse-ear cress).